The primary structure comprises 305 residues: tRNA pseudouridine synthase B (305 aa).

Residue D39 is the Nucleophile of the active site.

The protein belongs to the pseudouridine synthase TruB family. Type 1 subfamily.

The catalysed reaction is uridine(55) in tRNA = pseudouridine(55) in tRNA. Functionally, responsible for synthesis of pseudouridine from uracil-55 in the psi GC loop of transfer RNAs. This is tRNA pseudouridine synthase B from Staphylococcus haemolyticus (strain JCSC1435).